Consider the following 154-residue polypeptide: Interleukin-2 (154 aa).

An N-terminal signal peptide occupies residues 1 to 20 (MCKMQLLSCIALSLVLVANS). An O-linked (GalNAc...) threonine glycan is attached at Thr23. Cysteines 78 and 126 form a disulfide.

The protein belongs to the IL-2 family.

The protein resides in the secreted. In terms of biological role, cytokine produced by activated CD4-positive helper T-cells and to a lesser extend activated CD8-positive T-cells and natural killer (NK) cells that plays pivotal roles in the immune response and tolerance. Binds to a receptor complex composed of either the high-affinity trimeric IL-2R (IL2RA/CD25, IL2RB/CD122 and IL2RG/CD132) or the low-affinity dimeric IL-2R (IL2RB and IL2RG). Interaction with the receptor leads to oligomerization and conformation changes in the IL-2R subunits resulting in downstream signaling starting with phosphorylation of JAK1 and JAK3. In turn, JAK1 and JAK3 phosphorylate the receptor to form a docking site leading to the phosphorylation of several substrates including STAT5. This process leads to activation of several pathways including STAT, phosphoinositide-3-kinase/PI3K and mitogen-activated protein kinase/MAPK pathways. Functions as a T-cell growth factor and can increase NK-cell cytolytic activity as well. Promotes strong proliferation of activated B-cells and subsequently immunoglobulin production. Plays a pivotal role in regulating the adaptive immune system by controlling the survival and proliferation of regulatory T-cells, which are required for the maintenance of immune tolerance. Moreover, participates in the differentiation and homeostasis of effector T-cell subsets, including Th1, Th2, Th17 as well as memory CD8-positive T-cells. This Mirounga angustirostris (Northern elephant seal) protein is Interleukin-2 (IL2).